Consider the following 153-residue polypeptide: Prostaglandin E synthase (153 aa).

The Lumenal portion of the chain corresponds to 1–13; it reads MPSPGLVMESGQV. Residues 14–42 form a helical membrane-spanning segment; the sequence is LPAFLLCSTLLVIKMYAVAVITGQMRLRK. R39 serves as a coordination point for glutathione. Residues 43-61 lie on the Cytoplasmic side of the membrane; it reads KAFANPEDALKRGGLQYYR. The helical transmembrane segment at 62 to 91 threads the bilayer; sequence SDPDVERCLRAHRNDMETIYPFLFLGFVYS. Glutathione is bound at residue 74-78; that stretch reads RNDME. The Lumenal segment spans residues 92 to 96; sequence FLGPN. Residues 97 to 120 traverse the membrane as a helical segment; sequence PLIAWIHFLVVLTGRVVHTVAYLG. Glutathione is bound by residues H114 and Y118. The Cytoplasmic portion of the chain corresponds to 121-124; sequence KLNP. Residues 125-153 traverse the membrane as a helical segment; that stretch reads RLRSGAYVLAQFSCFSMALQILWEVAHHL. 127–131 is a glutathione binding site; it reads RSGAY.

This sequence belongs to the MAPEG family. Homotrimer. Glutathione is required as a cofactor.

It is found in the membrane. The protein localises to the cytoplasm. It localises to the perinuclear region. The catalysed reaction is prostaglandin H2 = prostaglandin E2. It catalyses the reaction 2-glyceryl-prostaglandin H2 = 2-glyceryl-prostaglandin E2. The enzyme catalyses prostaglandin G2 = (15S)-15-hydroperoxy-prostaglandin E2. It carries out the reaction 1-chloro-2,4-dinitrobenzene + glutathione = 2,4-dinitrophenyl-S-glutathione + chloride + H(+). The catalysed reaction is (5S)-hydroperoxy-(6E,8Z,11Z,14Z)-eicosatetraenoate + 2 glutathione = (5S)-hydroxy-(6E,8Z,11Z,14Z)-eicosatetraenoate + glutathione disulfide + H2O. It functions in the pathway lipid metabolism; prostaglandin biosynthesis. Its activity is regulated as follows. Activity is increased markedly in macrophages and osteoblasts following pro-inflammatory stimuli. In terms of biological role, terminal enzyme of the cyclooxygenase (COX)-2-mediated prostaglandin E2 (PGE2) biosynthetic pathway. Catalyzes the glutathione-dependent oxidoreduction of prostaglandin endoperoxide H2 (PGH2) to prostaglandin E2 (PGE2) in response to inflammatory stimuli. Plays a key role in inflammation response, fever and pain. Also catalyzes the oxidoreduction of endocannabinoids into prostaglandin glycerol esters and PGG2 into 15-hydroperoxy-PGE2. In addition, displays low glutathione transferase and glutathione-dependent peroxidase activities, toward 1-chloro-2,4-dinitrobenzene and 5-hydroperoxyicosatetraenoic acid (5-HPETE), respectively. The protein is Prostaglandin E synthase (Ptges) of Mus musculus (Mouse).